The following is a 96-amino-acid chain: Aspartyl/glutamyl-tRNA(Asn/Gln) amidotransferase subunit C (96 aa).

The protein belongs to the GatC family. In terms of assembly, heterotrimer of A, B and C subunits.

The enzyme catalyses L-glutamyl-tRNA(Gln) + L-glutamine + ATP + H2O = L-glutaminyl-tRNA(Gln) + L-glutamate + ADP + phosphate + H(+). The catalysed reaction is L-aspartyl-tRNA(Asn) + L-glutamine + ATP + H2O = L-asparaginyl-tRNA(Asn) + L-glutamate + ADP + phosphate + 2 H(+). Allows the formation of correctly charged Asn-tRNA(Asn) or Gln-tRNA(Gln) through the transamidation of misacylated Asp-tRNA(Asn) or Glu-tRNA(Gln) in organisms which lack either or both of asparaginyl-tRNA or glutaminyl-tRNA synthetases. The reaction takes place in the presence of glutamine and ATP through an activated phospho-Asp-tRNA(Asn) or phospho-Glu-tRNA(Gln). This Leptospira borgpetersenii serovar Hardjo-bovis (strain JB197) protein is Aspartyl/glutamyl-tRNA(Asn/Gln) amidotransferase subunit C.